A 249-amino-acid polypeptide reads, in one-letter code: U1 small nuclear ribonucleoprotein usp102 (249 aa).

The disordered stretch occupies residues 1 to 25 (MDPQTNSHQEVQQPSPKETDSQTPS). Residues 26 to 105 (ETLYIRNIEE…KPMMIQYSKS (80 aa)) form the RRM 1 domain. The disordered stretch occupies residues 113 to 157 (RESPEEIETRKKDRKNRREMLKRTSALQPAAPKPTHKKPVPKRNV). The segment covering 114-134 (ESPEEIETRKKDRKNRREMLK) has biased composition (basic and acidic residues). Residues 174–247 (KVLLLQNIPQ…NQIKVTFARK (74 aa)) form the RRM 2 domain.

This sequence belongs to the RRM U1 A/B'' family. As to quaternary structure, component of the spliceosome where it is associated with snRNP U1.

It localises to the nucleus. The protein resides in the nucleolus. Its function is as follows. Involved in nuclear mRNA splicing. The protein is U1 small nuclear ribonucleoprotein usp102 of Schizosaccharomyces pombe (strain 972 / ATCC 24843) (Fission yeast).